A 276-amino-acid chain; its full sequence is Expansin-A25 (276 aa).

A signal peptide spans 1-27 (MKLLEQMVYVECFMIIMATLLVSMSYG). The Expansin-like EG45 domain maps to 73–183 (QGACGYGDLF…RRISCARTGG (111 aa)). In terms of domain architecture, Expansin-like CBD spans 193–272 (YFLMILPYNV…NWGFGQTFDG (80 aa)).

This sequence belongs to the expansin family. Expansin A subfamily.

It localises to the secreted. It is found in the cell wall. The protein localises to the membrane. Its function is as follows. Causes loosening and extension of plant cell walls by disrupting non-covalent bonding between cellulose microfibrils and matrix glucans. No enzymatic activity has been found. The protein is Expansin-A25 (EXPA25) of Arabidopsis thaliana (Mouse-ear cress).